A 432-amino-acid chain; its full sequence is Peptidase B (432 aa).

Residues Lys196 and Asp201 each coordinate Mn(2+). Residue Lys208 is part of the active site. Mn(2+) contacts are provided by Asp219, Asp278, and Glu280. Arg282 is an active-site residue.

It belongs to the peptidase M17 family. As to quaternary structure, homohexamer. Requires Mn(2+) as cofactor.

The protein resides in the cytoplasm. The catalysed reaction is Release of an N-terminal amino acid, Xaa, from a peptide or arylamide. Xaa is preferably Glu or Asp but may be other amino acids, including Leu, Met, His, Cys and Gln.. Its function is as follows. Probably plays an important role in intracellular peptide degradation. This Yersinia pseudotuberculosis serotype IB (strain PB1/+) protein is Peptidase B.